A 620-amino-acid polypeptide reads, in one-letter code: Chaperone protein HscA homolog (620 aa).

This sequence belongs to the heat shock protein 70 family.

Its function is as follows. Chaperone involved in the maturation of iron-sulfur cluster-containing proteins. Has a low intrinsic ATPase activity which is markedly stimulated by HscB. The sequence is that of Chaperone protein HscA homolog from Shewanella woodyi (strain ATCC 51908 / MS32).